Here is a 615-residue protein sequence, read N- to C-terminus: 1-deoxy-D-xylulose-5-phosphate synthase (615 aa).

Residues His76 and 117–119 (GHS) contribute to the thiamine diphosphate site. Asp148 provides a ligand contact to Mg(2+). Thiamine diphosphate-binding positions include 149–150 (GA), Asn177, Tyr284, and Glu365. Asn177 contributes to the Mg(2+) binding site.

The protein belongs to the transketolase family. DXPS subfamily. Homodimer. Mg(2+) serves as cofactor. It depends on thiamine diphosphate as a cofactor.

The catalysed reaction is D-glyceraldehyde 3-phosphate + pyruvate + H(+) = 1-deoxy-D-xylulose 5-phosphate + CO2. Its pathway is metabolic intermediate biosynthesis; 1-deoxy-D-xylulose 5-phosphate biosynthesis; 1-deoxy-D-xylulose 5-phosphate from D-glyceraldehyde 3-phosphate and pyruvate: step 1/1. In terms of biological role, catalyzes the acyloin condensation reaction between C atoms 2 and 3 of pyruvate and glyceraldehyde 3-phosphate to yield 1-deoxy-D-xylulose-5-phosphate (DXP). The chain is 1-deoxy-D-xylulose-5-phosphate synthase from Francisella tularensis subsp. holarctica (strain FTNF002-00 / FTA).